We begin with the raw amino-acid sequence, 801 residues long: Protocadherin beta-8 (801 aa).

The first 29 residues, 1–29 (MEASGKLICRQRQVLFSFLLLGLSLAGAA), serve as a signal peptide directing secretion. Residues 30-691 (EPRSYSVVEE…GQADSLTVYL (662 aa)) lie on the Extracellular side of the membrane. Cadherin domains follow at residues 36–134 (VVEE…SPVF), 139–243 (MLVK…APEF), 248–348 (YRVQ…APEV), 353–452 (FTSP…APAF), and 457–562 (YTLF…SPFV). Cys-97 and Cys-103 form a disulfide bridge. 2 N-linked (GlcNAc...) asparagine glycosylation sites follow: Asn-419 and Asn-437. A glycan (N-linked (GlcNAc...) asparagine) is linked at Asn-568. In terms of domain architecture, Cadherin 6 spans 569–672 (SSAPCTELVP…LVDGFSQPYL (104 aa)). Residues 692 to 710 (VVALASVSSLFLFSVLLFV) traverse the membrane as a helical segment. At 711–801 (AVRLCRRSRA…NGFGFSLQLK (91 aa)) the chain is on the cytoplasmic side.

As to quaternary structure, forms homodimers in trans (molecules expressed by two different cells). Forms promiscuous heterodimers in cis (at the plasma membrane of the same cell) with other protocadherins.

The protein resides in the cell membrane. Its function is as follows. Calcium-dependent cell-adhesion protein involved in cells self-recognition and non-self discrimination. Thereby, it is involved in the establishment and maintenance of specific neuronal connections in the brain. The polypeptide is Protocadherin beta-8 (Pan troglodytes (Chimpanzee)).